We begin with the raw amino-acid sequence, 1005 residues long: Espin-like protein (1005 aa).

9 ANK repeats span residues M1–I31, L35–N64, N69–D99, S103–L132, E136–R166, S170–L200, D204–A234, E238–R267, and W270–L299. Disordered stretches follow at residues L333–Q444 and L462–A483. The span at M334 to L346 shows a compositional bias: pro residues. A compositionally biased stretch (polar residues) spans A468–T480. Residues L517–L541 are a coiled coil. 3 disordered regions span residues G616–Q644, R695–G730, and L773–G795.

As to quaternary structure, interacts with MYO3A (via C-terminus). Interacts with MYO3B (via C-terminus).

The protein localises to the cell projection. It is found in the stereocilium. Functionally, binds to but does not cross-link actin. Required for the formation and maintenance of inner ear hair cell stereocilia and staircase formation. Essential for normal hearing. The protein is Espin-like protein (ESPNL) of Homo sapiens (Human).